We begin with the raw amino-acid sequence, 404 residues long: Probable tRNA sulfurtransferase (404 aa).

The THUMP domain maps to 60–165; it reads QPIVEALKLV…DEAAYISYEE (106 aa). Residues 183-184, 208-209, arginine 265, glycine 287, and glutamine 296 each bind ATP; these read ML and HF.

It belongs to the ThiI family.

It localises to the cytoplasm. It catalyses the reaction [ThiI sulfur-carrier protein]-S-sulfanyl-L-cysteine + a uridine in tRNA + 2 reduced [2Fe-2S]-[ferredoxin] + ATP + H(+) = [ThiI sulfur-carrier protein]-L-cysteine + a 4-thiouridine in tRNA + 2 oxidized [2Fe-2S]-[ferredoxin] + AMP + diphosphate. The enzyme catalyses [ThiS sulfur-carrier protein]-C-terminal Gly-Gly-AMP + S-sulfanyl-L-cysteinyl-[cysteine desulfurase] + AH2 = [ThiS sulfur-carrier protein]-C-terminal-Gly-aminoethanethioate + L-cysteinyl-[cysteine desulfurase] + A + AMP + 2 H(+). The protein operates within cofactor biosynthesis; thiamine diphosphate biosynthesis. Catalyzes the ATP-dependent transfer of a sulfur to tRNA to produce 4-thiouridine in position 8 of tRNAs, which functions as a near-UV photosensor. Also catalyzes the transfer of sulfur to the sulfur carrier protein ThiS, forming ThiS-thiocarboxylate. This is a step in the synthesis of thiazole, in the thiamine biosynthesis pathway. The sulfur is donated as persulfide by IscS. The chain is Probable tRNA sulfurtransferase from Streptococcus pyogenes serotype M2 (strain MGAS10270).